The chain runs to 430 residues: Histidine--tRNA ligase (430 aa).

The protein belongs to the class-II aminoacyl-tRNA synthetase family. In terms of assembly, homodimer.

The protein localises to the cytoplasm. It catalyses the reaction tRNA(His) + L-histidine + ATP = L-histidyl-tRNA(His) + AMP + diphosphate + H(+). The chain is Histidine--tRNA ligase from Acinetobacter baumannii (strain AB307-0294).